A 343-amino-acid chain; its full sequence is Phosphatidylglycerol--prolipoprotein diacylglyceryl transferase (343 aa).

The next 4 membrane-spanning stretches (helical) occupy residues isoleucine 22–glycine 42, glycine 54–tyrosine 74, valine 97–isoleucine 117, and glycine 123–isoleucine 143. Arginine 145 lines the a 1,2-diacyl-sn-glycero-3-phospho-(1'-sn-glycerol) pocket. 2 consecutive transmembrane segments (helical) span residues valine 193 to isoleucine 213 and valine 257 to proline 277. Residues proline 283 to lysine 343 form a disordered region. The span at glycine 295–aspartate 325 shows a compositional bias: acidic residues.

Belongs to the Lgt family.

The protein localises to the cell membrane. The catalysed reaction is L-cysteinyl-[prolipoprotein] + a 1,2-diacyl-sn-glycero-3-phospho-(1'-sn-glycerol) = an S-1,2-diacyl-sn-glyceryl-L-cysteinyl-[prolipoprotein] + sn-glycerol 1-phosphate + H(+). It functions in the pathway protein modification; lipoprotein biosynthesis (diacylglyceryl transfer). Its function is as follows. Catalyzes the transfer of the diacylglyceryl group from phosphatidylglycerol to the sulfhydryl group of the N-terminal cysteine of a prolipoprotein, the first step in the formation of mature lipoproteins. This is Phosphatidylglycerol--prolipoprotein diacylglyceryl transferase from Mycobacteroides abscessus (strain ATCC 19977 / DSM 44196 / CCUG 20993 / CIP 104536 / JCM 13569 / NCTC 13031 / TMC 1543 / L948) (Mycobacterium abscessus).